The sequence spans 253 residues: Indole-3-glycerol phosphate synthase (253 aa).

Belongs to the TrpC family.

The enzyme catalyses 1-(2-carboxyphenylamino)-1-deoxy-D-ribulose 5-phosphate + H(+) = (1S,2R)-1-C-(indol-3-yl)glycerol 3-phosphate + CO2 + H2O. It participates in amino-acid biosynthesis; L-tryptophan biosynthesis; L-tryptophan from chorismate: step 4/5. The sequence is that of Indole-3-glycerol phosphate synthase from Bacillus cereus (strain ATCC 14579 / DSM 31 / CCUG 7414 / JCM 2152 / NBRC 15305 / NCIMB 9373 / NCTC 2599 / NRRL B-3711).